A 1046-amino-acid polypeptide reads, in one-letter code: uncharacterized protein (1046 aa).

Residues 594 to 615 (LNSIPSDSSSSGSSRKSSPRGS) are compositionally biased toward low complexity. Positions 594–622 (LNSIPSDSSSSGSSRKSSPRGSPNLGEAP) are disordered.

This is an uncharacterized protein from Invertebrate iridescent virus 6 (IIV-6).